The primary structure comprises 99 residues: Class II hydrophobin 1 (99 aa).

Residues 1 to 26 (MKFIAVVAALTASLAMAAPTESSTDT) form the signal peptide. Disulfide bonds link C31–C80, C41–C71, C42–C54, and C81–C92.

The protein belongs to the cerato-ulmin hydrophobin family. Homotetramer. Further self-assembles to form highly ordered films at water-air interfaces through intermolecular interactions.

It localises to the secreted. The protein resides in the cell wall. Aerial growth, conidiation, and dispersal of filamentous fungi in the environment rely upon a capability of their secreting small amphipathic proteins called hydrophobins (HPBs) with low sequence identity. Class I can self-assemble into an outermost layer of rodlet bundles on aerial cell surfaces, conferring cellular hydrophobicity that supports fungal growth, development and dispersal; whereas Class II form highly ordered films at water-air interfaces through intermolecular interactions but contribute nothing to the rodlet structure. HFB1 is a class II hydrophobin that shows antifungal activity against pathogenic and opportunistic fungi such as Cryptococcus neoformans, Nakaseomyces glabrataa, or Candida tropicalis. The sequence is that of Class II hydrophobin 1 from Sodiomyces alkalinus (strain CBS 110278 / VKM F-3762 / F11) (Alkaliphilic filamentous fungus).